Reading from the N-terminus, the 203-residue chain is Large ribosomal subunit protein bL25 (203 aa).

The protein belongs to the bacterial ribosomal protein bL25 family. CTC subfamily. Part of the 50S ribosomal subunit; part of the 5S rRNA/L5/L18/L25 subcomplex. Contacts the 5S rRNA. Binds to the 5S rRNA independently of L5 and L18.

Its function is as follows. This is one of the proteins that binds to the 5S RNA in the ribosome where it forms part of the central protuberance. This is Large ribosomal subunit protein bL25 from Rickettsia conorii (strain ATCC VR-613 / Malish 7).